The sequence spans 349 residues: Inositol-tetrakisphosphate 1-kinase 2 (349 aa).

Lys48 and Lys90 together coordinate 1D-myo-inositol 1,3,4-trisphosphate. Positions 125 and 175 each coordinate ATP. Residues His186 and Lys218 each coordinate 1D-myo-inositol 1,3,4-trisphosphate. Residues 207–218 (QEFVNHGGILFK) and Ser233 contribute to the ATP site. Mg(2+) contacts are provided by Asp298, Asp313, and Asn315. A 1D-myo-inositol 1,3,4-trisphosphate-binding site is contributed by Asn315.

Belongs to the ITPK1 family. Monomer. The cofactor is Mg(2+).

The catalysed reaction is 1D-myo-inositol 3,4,5,6-tetrakisphosphate + ATP = 1D-myo-inositol 1,3,4,5,6-pentakisphosphate + ADP + H(+). The enzyme catalyses 1D-myo-inositol 1,3,4-trisphosphate + ATP = 1D-myo-inositol 1,3,4,5-tetrakisphosphate + ADP + H(+). It catalyses the reaction 1D-myo-inositol 1,3,4-trisphosphate + ATP = 1D-myo-inositol 1,3,4,6-tetrakisphosphate + ADP + H(+). Functionally, kinase that can phosphorylate various inositol polyphosphate such as Ins(3,4,5,6)P4 or Ins(1,3,4)P3 and participates in phytic acid biosynthesis in developing seeds. Phytic acid is the primary storage form of phosphorus in cereal grains and other plant seeds. The chain is Inositol-tetrakisphosphate 1-kinase 2 (ITPK2) from Oryza sativa subsp. indica (Rice).